A 194-amino-acid chain; its full sequence is Imidazole glycerol phosphate synthase subunit HisH (194 aa).

The Glutamine amidotransferase type-1 domain occupies 1–194; the sequence is MIIIDTGCAN…QLLKNFVENL (194 aa). The active-site Nucleophile is the Cys-75. Residues His-175 and Glu-177 contribute to the active site.

As to quaternary structure, heterodimer of HisH and HisF.

Its subcellular location is the cytoplasm. It carries out the reaction 5-[(5-phospho-1-deoxy-D-ribulos-1-ylimino)methylamino]-1-(5-phospho-beta-D-ribosyl)imidazole-4-carboxamide + L-glutamine = D-erythro-1-(imidazol-4-yl)glycerol 3-phosphate + 5-amino-1-(5-phospho-beta-D-ribosyl)imidazole-4-carboxamide + L-glutamate + H(+). It catalyses the reaction L-glutamine + H2O = L-glutamate + NH4(+). It participates in amino-acid biosynthesis; L-histidine biosynthesis; L-histidine from 5-phospho-alpha-D-ribose 1-diphosphate: step 5/9. IGPS catalyzes the conversion of PRFAR and glutamine to IGP, AICAR and glutamate. The HisH subunit catalyzes the hydrolysis of glutamine to glutamate and ammonia as part of the synthesis of IGP and AICAR. The resulting ammonia molecule is channeled to the active site of HisF. The protein is Imidazole glycerol phosphate synthase subunit HisH of Mannheimia succiniciproducens (strain KCTC 0769BP / MBEL55E).